The chain runs to 240 residues: Protein unc-119 homolog A (240 aa).

Gly residues predominate over residues 1-12 (MKVKKGGGGTGP). The disordered stretch occupies residues 1 to 62 (MKVKKGGGGT…PLQGKQPIGP (62 aa)). Phosphoserine; by CK2 occurs at positions 37, 39, and 41. Position 131 (Y131) interacts with tetradecanoate.

It belongs to the PDE6D/unc-119 family. In terms of assembly, interacts with CABP4; in the absence of calcium. May interact with GTP-bound ARL1. Interacts with ARL2 and ARL3 (GTP-bound forms); this promotes the release of myristoylated cargo proteins. Found in a complex with ARL3, RP2 and UNC119; RP2 induces hydrolysis of GTP ARL3 in the complex, leading to the release of UNC119. Interacts with NPHP3 (when myristoylated). Interacts with CYS1 (when myristoylated). Interacts with MACIR; interaction only takes place when UNC119 is not liganded with myristoylated proteins. Interacts with ARL1 and ARL3 GTP-bound forms. Interacts with ARL2. Interacts with ARL2. Interacts with LCK; this interaction plays a crucial role in activation of LCK. Interacts with FYN. Interacts with RAB11A; in a cell cycle-dependent manner. Interacts with LYN (via SH2 and SH3 domains); leading to LYN activation. Interacts with DNM1; leading to a decrease of DNM1 GTPase activity. Found in a complex with ABL1, ABL2, CRK and UNC119; leading to the inhibition of CRK phosphorylation by ABL kinases. Interacts with CD44. Interacts with KLHL18 (via kelch repeats). Interacts with PPP3CA, PPP3CB and PPP3CC. Interacts with USP48; this interaction promotes UNC119 stability. Post-translationally, phosphorylation suppresses its interaction with KLHL18 and down-regulates its KLHL18-mediated degradation. Phosphorylated more under light conditions than dark conditions. Dephosphorylated by calcineurin.

It is found in the cytoplasm. Its subcellular location is the cytoskeleton. The protein resides in the microtubule organizing center. It localises to the centrosome. The protein localises to the spindle. It is found in the spindle pole. In terms of biological role, involved in synaptic functions in photoreceptor cells, the signal transduction in immune cells as a Src family kinase activator, endosome recycling, the uptake of bacteria and endocytosis, protein trafficking in sensory neurons and as lipid-binding chaperone with specificity for a diverse subset of myristoylated proteins. Specifically binds the myristoyl moiety of a subset of N-terminally myristoylated proteins and is required for their localization. Binds myristoylated GNAT1 and is required for G-protein localization and trafficking in sensory neurons. Probably plays a role in trafficking proteins in photoreceptor cells. Plays important roles in mediating Src family kinase signals for the completion of cytokinesis via RAB11A. The chain is Protein unc-119 homolog A (Unc119) from Rattus norvegicus (Rat).